Here is a 501-residue protein sequence, read N- to C-terminus: Adenylosuccinate synthetase 2, chloroplastic (501 aa).

Residues 87–93 (GDEGKGK) and 115–117 (GHT) each bind GTP. The active-site Proton acceptor is the Asp-88. 2 residues coordinate Mg(2+): Asp-88 and Gly-115. IMP contacts are provided by residues 88–91 (DEGK), 113–116 (NAGH), Thr-205, Arg-219, Gln-300, Thr-315, and Arg-379. His-116 serves as the catalytic Proton donor. 375 to 381 (NITGRPR) is a binding site for substrate. Residues Arg-381, 407–409 (KLD), and 490–492 (GIG) contribute to the GTP site.

It belongs to the adenylosuccinate synthetase family. In terms of assembly, homodimer. Requires Mg(2+) as cofactor.

The protein resides in the plastid. It is found in the chloroplast. The enzyme catalyses IMP + L-aspartate + GTP = N(6)-(1,2-dicarboxyethyl)-AMP + GDP + phosphate + 2 H(+). Its pathway is purine metabolism; AMP biosynthesis via de novo pathway; AMP from IMP: step 1/2. Plays an important role in the de novo pathway and in the salvage pathway of purine nucleotide biosynthesis. Catalyzes the first committed step in the biosynthesis of AMP from IMP. The sequence is that of Adenylosuccinate synthetase 2, chloroplastic from Capsicum frutescens (Cayenne pepper).